Here is a 231-residue protein sequence, read N- to C-terminus: Orotidine 5'-phosphate decarboxylase (231 aa).

Substrate-binding positions include Asp-11, Lys-33, 60-69, Thr-117, Arg-179, Gln-187, Gly-207, and Arg-208; that span reads DLKLHDIPNT. The Proton donor role is filled by Lys-62.

Belongs to the OMP decarboxylase family. Type 1 subfamily. In terms of assembly, homodimer.

It carries out the reaction orotidine 5'-phosphate + H(+) = UMP + CO2. Its pathway is pyrimidine metabolism; UMP biosynthesis via de novo pathway; UMP from orotate: step 2/2. Catalyzes the decarboxylation of orotidine 5'-monophosphate (OMP) to uridine 5'-monophosphate (UMP). The polypeptide is Orotidine 5'-phosphate decarboxylase (Ehrlichia chaffeensis (strain ATCC CRL-10679 / Arkansas)).